The primary structure comprises 168 residues: Transcription antitermination protein NusB (168 aa).

The protein belongs to the NusB family.

Involved in transcription antitermination. Required for transcription of ribosomal RNA (rRNA) genes. Binds specifically to the boxA antiterminator sequence of the ribosomal RNA (rrn) operons. The protein is Transcription antitermination protein NusB of Brucella anthropi (strain ATCC 49188 / DSM 6882 / CCUG 24695 / JCM 21032 / LMG 3331 / NBRC 15819 / NCTC 12168 / Alc 37) (Ochrobactrum anthropi).